We begin with the raw amino-acid sequence, 166 residues long: Protein SprT (166 aa).

The region spanning 21-160 (ANQHFSREFP…CQQCQQTLAF (140 aa)) is the SprT-like domain. Position 74 (histidine 74) interacts with Zn(2+). Residue glutamate 75 is part of the active site. Histidine 78 provides a ligand contact to Zn(2+).

The protein belongs to the SprT family. Zn(2+) is required as a cofactor.

The protein resides in the cytoplasm. This is Protein SprT from Vibrio atlanticus (strain LGP32) (Vibrio splendidus (strain Mel32)).